We begin with the raw amino-acid sequence, 932 residues long: F-box protein COS111 (932 aa).

Residues 29–63 (VSAKHRPSSTGVYGHDASTVDHASRSNNNLNLTRS) form a disordered region. Low complexity predominate over residues 53–63 (RSNNNLNLTRS). Residues 146 to 193 (RKEISDLPDEVLRNILSNVKDDQRTLVNCLYVNKAFYNATKPTLYERP) form the F-box domain. The span at 346–358 (LSEGKSSDNGNNG) shows a compositional bias: polar residues. Disordered stretches follow at residues 346-369 (LSEG…SVSS), 389-450 (TLSG…SNWF), 470-500 (ISSK…TEPF), and 863-893 (SVLP…SNDP). Composition is skewed to low complexity over residues 395–431 (NNSS…SQID) and 438–447 (TSSKSTSSTS). Polar residues predominate over residues 876–890 (DDTNNGENTIAQPFS).

In terms of biological role, F-box protein probably involved in ubiquitin conjugation pathway. This Candida glabrata (strain ATCC 2001 / BCRC 20586 / JCM 3761 / NBRC 0622 / NRRL Y-65 / CBS 138) (Yeast) protein is F-box protein COS111 (COS111).